The sequence spans 786 residues: Elastin (786 aa).

Positions 1–26 (MAGLTAAAPRPGVLLLLLSILHPSRP) are cleaved as a signal peptide. Hydroxyproline is present on P34. P65, P67, and P88 each carry hydroxyproline; partial. 2 positions are modified to allysine: K104 and K107. P116 carries the post-translational modification 4-hydroxyproline; partial. Residues P156, P167, P170, and P177 each carry the hydroxyproline; partial modification. P190 is modified (4-hydroxyproline; partial). Allysine occurs at positions 241, 261, and 265. 2 positions are modified to 4-hydroxyproline; partial: P283 and P286. The residue at position 290 (P290) is a Hydroxyproline; partial. An allysine mark is found at K312 and K315. 4-hydroxyproline; partial is present on residues P327, P342, and P347. Hydroxyproline; partial is present on residues P352 and P355. P360 is subject to 4-hydroxyproline; partial. Allysine occurs at positions 375, 379, and 382. P415 is modified (4-hydroxyproline; partial). A Hydroxyproline; partial modification is found at P421. P427 carries the 4-hydroxyproline; partial modification. K448 and K451 each carry allysine. A Hydroxyproline; partial modification is found at P465. 4-hydroxyproline; partial is present on P481. Residues K492 and K496 each carry the allysine modification. Hydroxyproline; partial occurs at positions 522 and 550. Allysine occurs at positions 558, 562, and 566. Residue P580 is modified to 4-hydroxyproline; partial. P589 and P598 each carry 4-hydroxyproline. A 4-hydroxyproline; partial modification is found at P607. The interval 615-645 (EGVRRSLSPELREGDPSSSQHLPSTPSSPRV) is disordered. The segment covering 630-645 (PSSSQHLPSTPSSPRV) has biased composition (low complexity). Hydroxyproline; partial is present on P646. Allysine is present on residues K653 and K656. P677 carries the post-translational modification 4-hydroxyproline; partial. 4 positions are modified to allysine: K693, K697, K735, and K738. Residues P769 and P772 each carry the hydroxyproline; partial modification. The cysteines at positions 776 and 781 are disulfide-linked.

This sequence belongs to the elastin family. The polymeric elastin chains are cross-linked together into an extensible 3D network. Forms a ternary complex with BGN and MFAP2. Interacts with MFAP2 via divalent cations (calcium &gt; magnesium &gt; manganese) in a dose-dependent and saturating manner. Interacts with FBLN5. Interacts with FBN1. Forms a ternary complex with FBN1 and FBLN2 or FBLN5. Interacts with MFAP4 in a Ca (2+)-dependent manner; this interaction promotes ELN self-assembly. Interacts with EFEMP2 with moderate affinity. Post-translationally, elastin is formed through the cross-linking of its soluble precursor tropoelastin. Cross-linking is initiated through the action of lysyl oxidase on exposed lysines to form allysine. Subsequent spontaneous condensation reactions with other allysine or unmodified lysine residues result in various bi-, tri-, and tetrafunctional cross-links. The most abundant cross-links in mature elastin fibers are lysinonorleucine, allysine aldol, desmosine, and isodesmosine. In terms of processing, hydroxylation on proline residues within the sequence motif, GXPG, is most likely 4-hydroxy as this fits the requirement for 4-hydroxylation in vertebrates. Expressed within the outer myometrial smooth muscle and throughout the arteriolar tree of uterus (at protein level). Also expressed in the large arteries, lung and skin.

Its subcellular location is the secreted. It localises to the extracellular space. The protein resides in the extracellular matrix. Functionally, major structural protein of tissues such as aorta and nuchal ligament, which must expand rapidly and recover completely. Molecular determinant of the late arterial morphogenesis, stabilizing arterial structure by regulating proliferation and organization of vascular smooth muscle. This chain is Elastin (ELN), found in Homo sapiens (Human).